A 115-amino-acid polypeptide reads, in one-letter code: Large ribosomal subunit protein bL19 (115 aa).

The protein belongs to the bacterial ribosomal protein bL19 family.

Functionally, this protein is located at the 30S-50S ribosomal subunit interface and may play a role in the structure and function of the aminoacyl-tRNA binding site. In Yersinia pseudotuberculosis serotype O:1b (strain IP 31758), this protein is Large ribosomal subunit protein bL19.